Here is a 264-residue protein sequence, read N- to C-terminus: 3-methyl-2-oxobutanoate hydroxymethyltransferase (264 aa).

Residues Asp45 and Asp84 each contribute to the Mg(2+) site. 3-methyl-2-oxobutanoate-binding positions include 45-46 (DS), Asp84, and Lys112. A Mg(2+)-binding site is contributed by Glu114. The active-site Proton acceptor is Glu181.

The protein belongs to the PanB family. As to quaternary structure, homodecamer; pentamer of dimers. The cofactor is Mg(2+).

Its subcellular location is the cytoplasm. The catalysed reaction is 3-methyl-2-oxobutanoate + (6R)-5,10-methylene-5,6,7,8-tetrahydrofolate + H2O = 2-dehydropantoate + (6S)-5,6,7,8-tetrahydrofolate. The protein operates within cofactor biosynthesis; (R)-pantothenate biosynthesis; (R)-pantoate from 3-methyl-2-oxobutanoate: step 1/2. Catalyzes the reversible reaction in which hydroxymethyl group from 5,10-methylenetetrahydrofolate is transferred onto alpha-ketoisovalerate to form ketopantoate. The chain is 3-methyl-2-oxobutanoate hydroxymethyltransferase from Shewanella pealeana (strain ATCC 700345 / ANG-SQ1).